Consider the following 146-residue polypeptide: Anti-sigma F factor (146 aa).

It belongs to the anti-sigma-factor family.

It carries out the reaction L-seryl-[protein] + ATP = O-phospho-L-seryl-[protein] + ADP + H(+). The enzyme catalyses L-threonyl-[protein] + ATP = O-phospho-L-threonyl-[protein] + ADP + H(+). In terms of biological role, binds to sigma F and blocks its ability to form an RNA polymerase holoenzyme (E-sigma F). Phosphorylates SpoIIAA on a serine residue. This phosphorylation may enable SpoIIAA to act as an anti-anti-sigma factor that counteracts SpoIIAB and thus releases sigma F from inhibition. The sequence is that of Anti-sigma F factor from Bacillus anthracis (strain A0248).